We begin with the raw amino-acid sequence, 1175 residues long: uncharacterized protein (1175 aa).

586–593 (GPAGTGKT) is a binding site for ATP.

This is an uncharacterized protein from Methanocaldococcus jannaschii (strain ATCC 43067 / DSM 2661 / JAL-1 / JCM 10045 / NBRC 100440) (Methanococcus jannaschii).